Reading from the N-terminus, the 388-residue chain is Chorismate synthase (388 aa).

Residues arginine 39 and arginine 45 each coordinate NADP(+). Residues glutamate 95–lysine 118 form a disordered region. FMN is bound by residues arginine 130 to serine 132, asparagine 251 to alanine 252, glycine 296, lysine 311 to threonine 315, and arginine 337.

It belongs to the chorismate synthase family. In terms of assembly, homotetramer. Requires FMNH2 as cofactor.

It catalyses the reaction 5-O-(1-carboxyvinyl)-3-phosphoshikimate = chorismate + phosphate. It participates in metabolic intermediate biosynthesis; chorismate biosynthesis; chorismate from D-erythrose 4-phosphate and phosphoenolpyruvate: step 7/7. In terms of biological role, catalyzes the anti-1,4-elimination of the C-3 phosphate and the C-6 proR hydrogen from 5-enolpyruvylshikimate-3-phosphate (EPSP) to yield chorismate, which is the branch point compound that serves as the starting substrate for the three terminal pathways of aromatic amino acid biosynthesis. This reaction introduces a second double bond into the aromatic ring system. This chain is Chorismate synthase, found in Listeria innocua serovar 6a (strain ATCC BAA-680 / CLIP 11262).